A 188-amino-acid polypeptide reads, in one-letter code: Probable nicotinate-nucleotide adenylyltransferase (188 aa).

The protein belongs to the NadD family.

The catalysed reaction is nicotinate beta-D-ribonucleotide + ATP + H(+) = deamido-NAD(+) + diphosphate. Its pathway is cofactor biosynthesis; NAD(+) biosynthesis; deamido-NAD(+) from nicotinate D-ribonucleotide: step 1/1. Its function is as follows. Catalyzes the reversible adenylation of nicotinate mononucleotide (NaMN) to nicotinic acid adenine dinucleotide (NaAD). This chain is Probable nicotinate-nucleotide adenylyltransferase, found in Listeria innocua serovar 6a (strain ATCC BAA-680 / CLIP 11262).